Reading from the N-terminus, the 373-residue chain is MKLFEYQAKEAFREKGLPTPKGVLVRGMDELDGAFAEVGFPCVLKSQVLSGGRGKAGLIKVVKDAESAKATAKTLFESEHNVRMLLVEEAVDIDREIYLSITVDPVESKIMLIGCAEGGVEIEKLAATDPDKIVTVRVDIAEGLGGYHVNNLTYGMGLSGDLGKQVGAVVRGLYKTFRAYDAQLAEINPLFITKDGKAIAGDGKLIIDDNSVWRQPSYPLTRDYFDSEVEFEAAQEGIPYLQFNGDIALMCAGAGLTTTVFDLINDAGGHPATYVEFGGANYTKAVRTMELCLKTPSKVILVVTFGTIARADVMAQGLVEAIKAHQPKQPIVTCIRGTNEEEAFAILRDAGLEPLTNTEEAVQRAVDIAAGRA.

The ATP-grasp domain occupies 9–249 (KEAFREKGLP…YLQFNGDIAL (241 aa)). 35 to 97 (FAEVGFPCVL…EEAVDIDREI (63 aa)) is a binding site for ATP. The Mg(2+) site is built by glutamate 186 and asparagine 188.

The protein belongs to the succinate/malate CoA ligase beta subunit family. Forms a complex with SauD. Requires Mg(2+) as cofactor.

It catalyses the reaction sulfoacetate + ATP + CoA = sulfoacetyl-CoA + ADP + phosphate. Involved in the degradation of sulfoacetate. Catalyzes the CoA- and ATP-dependent conversion of sulfoacetate to sulfoacetyl-CoA and ADP. Cannot use other sulfonic and carboxylic acids, and shows only residual activity with 3-sulfopropanoate and malonic acid. In Bilophila wadsworthia (strain 3_1_6), this protein is ADP-forming sulfoacetate-CoA ligase subunit SauC.